A 590-amino-acid chain; its full sequence is Acyl-CoA ligase sidI (590 aa).

Positions 6 to 14 (RLQQTLSHL) match the PTS2-type peroxisomal targeting signal motif. Residues 220–228 (TSGSTGNPK), 359–364 (SSYGLT), D449, and R464 contribute to the ATP site. T364 lines the substrate pocket. Residues 472-474 (GGE) and 543-545 (YFF) each bind CoA. K563 is an ATP binding site.

It belongs to the ATP-dependent AMP-binding enzyme family.

The protein localises to the peroxisome. It functions in the pathway siderophore biosynthesis. Functionally, acyl-CoA ligase; part of the siderophore biosynthetic pathway. Aspergillus fumigatus produces 4 types of siderophores, low-molecular-mass iron chelators, including excreted fusarinine C (FsC) and triacetylfusarinine C (TAFC) for iron uptake and intacellular ferricrocin (FC) for hyphal and hydroxyferricrocin (HFC) for conidial iron distribution and storage. TAFC consists of 3 N(2)-acetyl-N(5)-anhydromevalonyl-N(5)-hydroxyornithine residues cyclically linked by ester bonds; FC is a cyclic hexapeptide with the structure Gly-Ser-Gly-(N(5)-acetyl-N(5)-hydroxyornithine)x3. The biosynthesis of all four siderophores depends on the hydroxylation of ornithine, catalyzed by the monooxygenase sidA. Subsequently, the pathways for biosynthesis of extra- and intracellular siderophores split. For biosynthesis of extracellular siderophores, the transacylase sidF transfers anhydromevalonyl to N(5)-hydroxyornithine. The required anhydromevalonyl-CoA moiety is derived from mevalonate by CoA ligation and dehydration catalyzed by sidI and sidH respectively. The acetylation of N(5)-hydroxyornithine for FC biosynthesis involves the constitutively expressed sidL. FC is hydroxylated to HFC by an as yet uncharacterized enzyme during conidiation. Assembly of fusarinine C (FsC) and FC is catalyzed by two different nonribosomal peptide synthetases (NRPS), sidD and sidC respectively. Subsequently, sidG catalyzes N2-acetylation of FsC for forming TAFC. Both extra- and intracellular siderophores are crucial for growth during iron limitation and virulence. In Aspergillus fumigatus (strain ATCC MYA-4609 / CBS 101355 / FGSC A1100 / Af293) (Neosartorya fumigata), this protein is Acyl-CoA ligase sidI.